Here is a 148-residue protein sequence, read N- to C-terminus: Large ribosomal subunit protein bL9 (148 aa).

Part of the 50S ribosomal subunit.

Functionally, binds to the 23S rRNA. Extends more that 50 Angstroms beyond the surface of the 70S ribosome. The sequence is that of Large ribosomal subunit protein bL9 (rplI) from Thermus thermophilus (strain ATCC 27634 / DSM 579 / HB8).